The sequence spans 163 residues: Nucleotide-binding protein BCG9842_B4128 (163 aa).

The protein belongs to the YajQ family.

Functionally, nucleotide-binding protein. This chain is Nucleotide-binding protein BCG9842_B4128, found in Bacillus cereus (strain G9842).